Consider the following 369-residue polypeptide: MDMAYELLNGSQPWLSSPFDLNGSVATANSSNQTEPYYDLTSNAVLTFIYFVVCIIGLCGNTLVIYVILRYAKMKTITNIYILNLAIADELFMLGLPFLAMQVALVHWPFGKAICRVVMTVDGINQFTSIFCLTVMSIDRYLAVVHPIKSAKWRRPRTAKMINVAVWGVSLLVILPIMIYAGLRSNQWGRSSCTINWPGESGAWYTGFIIYAFILGFLVPLTIICLCYLFIIIKVKSSGIRVGSSKRKKSEKKVTRMVSIVVAVFIFCWLPFYIFNVSSVSVAISPTPALKGMFDFVVVLTYANSCANPILYAFLSDNFKKSFQNVLCLVKVSGTDDGERSDSKQDKSRLNETTETQRTLLNGDLQTSI.

The Extracellular segment spans residues 1-43 (MDMAYELLNGSQPWLSSPFDLNGSVATANSSNQTEPYYDLTSN). N-linked (GlcNAc...) asparagine glycans are attached at residues asparagine 9, asparagine 22, asparagine 29, and asparagine 32. The helical transmembrane segment at 44–67 (AVLTFIYFVVCIIGLCGNTLVIYV) threads the bilayer. Over 68–78 (ILRYAKMKTIT) the chain is Cytoplasmic. A helical membrane pass occupies residues 79–103 (NIYILNLAIADELFMLGLPFLAMQV). The Extracellular segment spans residues 104-118 (ALVHWPFGKAICRVV). A disulfide bond links cysteine 115 and cysteine 193. A helical transmembrane segment spans residues 119–138 (MTVDGINQFTSIFCLTVMSI). The Cytoplasmic portion of the chain corresponds to 139-161 (DRYLAVVHPIKSAKWRRPRTAKM). A helical membrane pass occupies residues 162-181 (INVAVWGVSLLVILPIMIYA). Residues 182–207 (GLRSNQWGRSSCTINWPGESGAWYTG) are Extracellular-facing. A helical transmembrane segment spans residues 208-229 (FIIYAFILGFLVPLTIICLCYL). The Cytoplasmic portion of the chain corresponds to 230-253 (FIIIKVKSSGIRVGSSKRKKSEKK). Residues 254 to 278 (VTRMVSIVVAVFIFCWLPFYIFNVS) form a helical membrane-spanning segment. Residues 279-288 (SVSVAISPTP) lie on the Extracellular side of the membrane. A helical membrane pass occupies residues 289 to 303 (ALKGMFDFVVVLTYA). Residues 304 to 369 (NSCANPILYA…LLNGDLQTSI (66 aa)) lie on the Cytoplasmic side of the membrane. Cysteine 328 carries the S-palmitoyl cysteine lipid modification. A phosphoserine mark is found at serine 341, serine 343, and serine 348. 2 positions are modified to phosphothreonine: threonine 353 and threonine 354.

This sequence belongs to the G-protein coupled receptor 1 family. In terms of assembly, homodimer and heterodimer with SSTR3 and SSTR5. Heterodimerization with SSTR3 inactivates SSTR3 receptor function. Heterodimerization with SSTR5 is enhanced by agonist stimulation of SSTR2 and increases SSTR2 cell growth inhibition activity. Following agonist stimulation, homodimers dissociate into monomers which is required for receptor internalization. Interacts with beta-arrestin; this interaction is necessary for receptor internalization and is destabilized by heterodimerization with SSTR5 which results in increased recycling of SSTR2 to the cell surface. Interacts (via C-terminus) with SHANK1 (via PDZ domain). Phosphorylated on serine and threonine residues in response to agonist stimulation, leading to receptor desensitization and rapid internalization. Phosphorylated to a greater extent on serine than threonine residues. Threonine phosphorylation is required for arrestin binding and receptor endocytosis but is not necessary for desensitization.

It is found in the cell membrane. The protein resides in the cytoplasm. Receptor for somatostatin-14 and -28. This receptor is coupled via pertussis toxin sensitive G proteins to inhibition of adenylyl cyclase. In addition it stimulates phosphotyrosine phosphatase and PLC via pertussis toxin insensitive as well as sensitive G proteins. Inhibits calcium entry by suppressing voltage-dependent calcium channels. Acts as the functionally dominant somatostatin receptor in pancreatic alpha- and beta-cells where it mediates the inhibitory effect of somatostatin-14 on hormone secretion. Inhibits cell growth through enhancement of MAPK1 and MAPK2 phosphorylation and subsequent up-regulation of CDKN1B. Stimulates neuronal migration and axon outgrowth and may participate in neuron development and maturation during brain development. Mediates negative regulation of insulin receptor signaling through PTPN6. Inactivates SSTR3 receptor function following heterodimerization. This chain is Somatostatin receptor type 2 (SSTR2), found in Sus scrofa (Pig).